The following is a 363-amino-acid chain: Dihydroorotate dehydrogenase (quinone) (363 aa).

Residues 62–66 (AGYDK) and T86 contribute to the FMN site. Substrate is bound at residue K66. 111 to 115 (NRLGF) is a binding site for substrate. 2 residues coordinate FMN: N140 and N171. N171 is a substrate binding site. S174 functions as the Nucleophile in the catalytic mechanism. N176 serves as a coordination point for substrate. FMN is bound by residues K216 and S244. 245–246 (NT) contributes to the substrate binding site. FMN-binding positions include G267, G296, and 317–318 (YS).

It belongs to the dihydroorotate dehydrogenase family. Type 2 subfamily. In terms of assembly, monomer. FMN serves as cofactor.

The protein localises to the cell membrane. The catalysed reaction is (S)-dihydroorotate + a quinone = orotate + a quinol. It participates in pyrimidine metabolism; UMP biosynthesis via de novo pathway; orotate from (S)-dihydroorotate (quinone route): step 1/1. Catalyzes the conversion of dihydroorotate to orotate with quinone as electron acceptor. In Allorhizobium ampelinum (strain ATCC BAA-846 / DSM 112012 / S4) (Agrobacterium vitis (strain S4)), this protein is Dihydroorotate dehydrogenase (quinone).